A 100-amino-acid chain; its full sequence is Large ribosomal subunit protein bL21 (100 aa).

The protein belongs to the bacterial ribosomal protein bL21 family. As to quaternary structure, part of the 50S ribosomal subunit. Contacts protein L20.

Functionally, this protein binds to 23S rRNA in the presence of protein L20. The chain is Large ribosomal subunit protein bL21 from Mycoplasma genitalium (strain ATCC 33530 / DSM 19775 / NCTC 10195 / G37) (Mycoplasmoides genitalium).